Consider the following 280-residue polypeptide: Energy-coupling factor transporter ATP-binding protein EcfA1 (280 aa).

The region spanning 6–241 (LRTENISFQY…SHMLQEIGLD (236 aa)) is the ABC transporter domain. Residue 40–47 (GQNGSGKS) coordinates ATP.

Belongs to the ABC transporter superfamily. Energy-coupling factor EcfA family. As to quaternary structure, forms a stable energy-coupling factor (ECF) transporter complex composed of 2 membrane-embedded substrate-binding proteins (S component), 2 ATP-binding proteins (A component) and 2 transmembrane proteins (T component).

It is found in the cell membrane. In terms of biological role, ATP-binding (A) component of a common energy-coupling factor (ECF) ABC-transporter complex. Unlike classic ABC transporters this ECF transporter provides the energy necessary to transport a number of different substrates. This chain is Energy-coupling factor transporter ATP-binding protein EcfA1, found in Bacillus thuringiensis subsp. konkukian (strain 97-27).